The primary structure comprises 451 residues: UPF0210 protein NGO_1297 (451 aa).

It belongs to the UPF0210 family. Homodimer.

This chain is UPF0210 protein NGO_1297, found in Neisseria gonorrhoeae (strain ATCC 700825 / FA 1090).